Consider the following 75-residue polypeptide: U6-lycotoxin-Ls1g (75 aa).

The N-terminal stretch at 1–21 is a signal peptide; the sequence is MKLLLFTALVLVVISLIEVEA. Residues 22-25 constitute a propeptide that is removed on maturation; it reads ENER.

The protein belongs to the neurotoxin 19 (CSTX) family. 06 (U6-Lctx) subfamily. Post-translationally, contains 4 disulfide bonds. As to expression, expressed by the venom gland.

The protein localises to the secreted. The protein is U6-lycotoxin-Ls1g of Lycosa singoriensis (Wolf spider).